A 350-amino-acid polypeptide reads, in one-letter code: Flap endonuclease 1 (350 aa).

An N-domain region spans residues 1 to 102 (MGVNLKDLIP…KEIEKRRKIR (102 aa)). Residues Asp31, Asp84, Glu156, Glu158, Asp177, Asp179, and Asp240 each contribute to the Mg(2+) site. The segment at 120–262 (AARRYAMMSA…KALQLVKAYK (143 aa)) is I-domain. The tract at residues 341–349 (KQLGLEAWF) is interaction with PCNA.

It belongs to the XPG/RAD2 endonuclease family. FEN1 subfamily. Interacts with PCNA. PCNA stimulates the nuclease activity without altering cleavage specificity. Mg(2+) is required as a cofactor.

Its function is as follows. Structure-specific nuclease with 5'-flap endonuclease and 5'-3' exonuclease activities involved in DNA replication and repair. During DNA replication, cleaves the 5'-overhanging flap structure that is generated by displacement synthesis when DNA polymerase encounters the 5'-end of a downstream Okazaki fragment. Binds the unpaired 3'-DNA end and kinks the DNA to facilitate 5' cleavage specificity. Cleaves one nucleotide into the double-stranded DNA from the junction in flap DNA, leaving a nick for ligation. Also involved in the base excision repair (BER) pathway. Acts as a genome stabilization factor that prevents flaps from equilibrating into structures that lead to duplications and deletions. Also possesses 5'-3' exonuclease activity on nicked or gapped double-stranded DNA. The sequence is that of Flap endonuclease 1 from Staphylothermus marinus (strain ATCC 43588 / DSM 3639 / JCM 9404 / F1).